Here is a 136-residue protein sequence, read N- to C-terminus: Large ribosomal subunit protein uL16 (136 aa).

The protein belongs to the universal ribosomal protein uL16 family. Part of the 50S ribosomal subunit.

Functionally, binds 23S rRNA and is also seen to make contacts with the A and possibly P site tRNAs. The polypeptide is Large ribosomal subunit protein uL16 (Shewanella piezotolerans (strain WP3 / JCM 13877)).